A 274-amino-acid chain; its full sequence is Large ribosomal subunit protein uL2 (274 aa).

The tract at residues 1–23 (MAIKIYRPTSPGRRHHSVSSFEE) is disordered.

This sequence belongs to the universal ribosomal protein uL2 family. Part of the 50S ribosomal subunit. Forms a bridge to the 30S subunit in the 70S ribosome.

One of the primary rRNA binding proteins. Required for association of the 30S and 50S subunits to form the 70S ribosome, for tRNA binding and peptide bond formation. It has been suggested to have peptidyltransferase activity; this is somewhat controversial. Makes several contacts with the 16S rRNA in the 70S ribosome. This Dehalococcoides mccartyi (strain ATCC BAA-2100 / JCM 16839 / KCTC 5957 / BAV1) protein is Large ribosomal subunit protein uL2.